The sequence spans 113 residues: Iron-sulfur cluster insertion protein ErpA (113 aa).

Residues Cys-41, Cys-105, and Cys-107 each coordinate iron-sulfur cluster.

This sequence belongs to the HesB/IscA family. Homodimer. The cofactor is iron-sulfur cluster.

In terms of biological role, required for insertion of 4Fe-4S clusters for at least IspG. The protein is Iron-sulfur cluster insertion protein ErpA of Histophilus somni (strain 2336) (Haemophilus somnus).